A 211-amino-acid chain; its full sequence is Thiamine-phosphate synthase (211 aa).

Residues 37 to 41 (QLRIK) and Asn-69 each bind 4-amino-2-methyl-5-(diphosphooxymethyl)pyrimidine. Residues Asp-70 and Asp-89 each contribute to the Mg(2+) site. Ser-108 is a binding site for 4-amino-2-methyl-5-(diphosphooxymethyl)pyrimidine. 134–136 (TQT) is a 2-[(2R,5Z)-2-carboxy-4-methylthiazol-5(2H)-ylidene]ethyl phosphate binding site. Lys-137 contacts 4-amino-2-methyl-5-(diphosphooxymethyl)pyrimidine. 2-[(2R,5Z)-2-carboxy-4-methylthiazol-5(2H)-ylidene]ethyl phosphate is bound by residues Gly-166 and 186 to 187 (VS).

Belongs to the thiamine-phosphate synthase family. The cofactor is Mg(2+).

The catalysed reaction is 2-[(2R,5Z)-2-carboxy-4-methylthiazol-5(2H)-ylidene]ethyl phosphate + 4-amino-2-methyl-5-(diphosphooxymethyl)pyrimidine + 2 H(+) = thiamine phosphate + CO2 + diphosphate. It carries out the reaction 2-(2-carboxy-4-methylthiazol-5-yl)ethyl phosphate + 4-amino-2-methyl-5-(diphosphooxymethyl)pyrimidine + 2 H(+) = thiamine phosphate + CO2 + diphosphate. It catalyses the reaction 4-methyl-5-(2-phosphooxyethyl)-thiazole + 4-amino-2-methyl-5-(diphosphooxymethyl)pyrimidine + H(+) = thiamine phosphate + diphosphate. The protein operates within cofactor biosynthesis; thiamine diphosphate biosynthesis; thiamine phosphate from 4-amino-2-methyl-5-diphosphomethylpyrimidine and 4-methyl-5-(2-phosphoethyl)-thiazole: step 1/1. In terms of biological role, condenses 4-methyl-5-(beta-hydroxyethyl)thiazole monophosphate (THZ-P) and 2-methyl-4-amino-5-hydroxymethyl pyrimidine pyrophosphate (HMP-PP) to form thiamine monophosphate (TMP). This is Thiamine-phosphate synthase from Salmonella typhimurium (strain LT2 / SGSC1412 / ATCC 700720).